The primary structure comprises 653 residues: Exocyst complex component EXO70C1 (653 aa).

Composition is skewed to basic and acidic residues over residues 1-34 (MEKSGNHHHANESSENHDHKSEDHENKQHSDELH), 159-177 (SREEEKKNNNNNNHHDGSN), and 438-451 (NKPEPETKPRQQQR). Disordered stretches follow at residues 1 to 50 (MEKS…HSLV), 159 to 190 (SREEEKKNNNNNNHHDGSNSDHNNSSTNDSDR), and 432 to 456 (EANQTDNKPEPETKPRQQQREDDEE).

This sequence belongs to the EXO70 family. In terms of assembly, interacts with ROH1A. Binds directly to B1L. Post-translationally, phosphorylated. In terms of tissue distribution, expressed in anthers, pollen and root trichoblast cells.

Its subcellular location is the cytoplasm. Its function is as follows. Required for global plant growth and for male transmission. Involved in the regulation of tip growth of pollen tube. This chain is Exocyst complex component EXO70C1, found in Arabidopsis thaliana (Mouse-ear cress).